A 270-amino-acid chain; its full sequence is Cross-pathway control protein 1 (270 aa).

2 disordered regions span residues 114–135 and 153–213; these read QAQAQVQTQPQTQTQTEQQTQP and QTVH…IIVE. A compositionally biased stretch (low complexity) spans 184-195; it reads SVSPPSGRHSSV. Positions 216–270 constitute a bZIP domain; it reads SDVVAMKRARNTLAARKSRERKAQRLEELEAKIEELIAERDRWKNLALAHGASTE. The tract at residues 222 to 240 is basic motif; the sequence is KRARNTLAARKSRERKAQR. The leucine-zipper stretch occupies residues 241–248; that stretch reads LEELEAKI.

Belongs to the bZIP family. GCN4 subfamily. In terms of assembly, binds DNA as a dimer.

The protein resides in the nucleus. In N.crassa grown under amino acid starvation conditions, this protein is required for increasing the transcription of the genes coding for many amino acid biosynthetic pathways enzymes. This transcription factor binds and recognize the DNA sequence: 5'-TGACTC-3'. This Neurospora crassa (strain ATCC 24698 / 74-OR23-1A / CBS 708.71 / DSM 1257 / FGSC 987) protein is Cross-pathway control protein 1 (cpc-1).